A 995-amino-acid polypeptide reads, in one-letter code: Integrator complex subunit 8 (995 aa).

The residue at position 18 (Thr18) is a Phosphothreonine. A WFEF motif motif is present at residues Trp24–Leu29. TPR repeat units follow at residues Cys250–Ile288, Ser320–Val356, Val570–Phe603, and His833–Phe866.

This sequence belongs to the Integrator subunit 8 family. Component of the Integrator complex, composed of core subunits INTS1, INTS2, INTS3, INTS4, INTS5, INTS6, INTS7, INTS8, INTS9/RC74, INTS10, INTS11/CPSF3L, INTS12, INTS13, INTS14 and INTS15. The core complex associates with protein phosphatase 2A subunits PPP2CA and PPP2R1A, to form the Integrator-PP2A (INTAC) complex.

It localises to the nucleus. Its subcellular location is the chromosome. Its function is as follows. Component of the integrator complex, a multiprotein complex that terminates RNA polymerase II (Pol II) transcription in the promoter-proximal region of genes. The integrator complex provides a quality checkpoint during transcription elongation by driving premature transcription termination of transcripts that are unfavorably configured for transcriptional elongation: the complex terminates transcription by (1) catalyzing dephosphorylation of the C-terminal domain (CTD) of Pol II subunit POLR2A/RPB1 and SUPT5H/SPT5, (2) degrading the exiting nascent RNA transcript via endonuclease activity and (3) promoting the release of Pol II from bound DNA. The integrator complex is also involved in terminating the synthesis of non-coding Pol II transcripts, such as enhancer RNAs (eRNAs), small nuclear RNAs (snRNAs), telomerase RNAs and long non-coding RNAs (lncRNAs). Within the integrator complex, INTS8 is required for the recruitment of protein phosphatase 2A (PP2A) to transcription pause-release checkpoint. This is Integrator complex subunit 8 (Ints8) from Mus musculus (Mouse).